A 260-amino-acid chain; its full sequence is ProSAAS (260 aa).

Positions 1-33 are cleaved as a signal peptide; it reads MAGSPLLCGPRAGGVGLLVLLLLGLLRLPPTLS. Residues 34 to 215 form a proSAAS(1-180) region; sequence ARPVKEPRSL…SSEPEAAPAP (182 aa). Disordered stretches follow at residues 162 to 187 and 206 to 234; these read AALR…ADET and SSEP…PPEN. The interval 221–260 is C-terminal inhibitory domain; interacts with PCSK1; sequence AVDQDLGPEVPPENVLGALLRVKRLENSSPQAPARRLLPP. The short motif at 239–244 is the Sufficient for inhibition of PCSK1 element; sequence LLRVKR.

Interacts via the C-terminal inhibitory domain with PCSK1 65 kDa form. In terms of processing, proteolytically cleaved in the Golgi. Big SAAS, Little SAAS, PEN and Big LEN are the major processed peptides in proSAAS-overexpressing PC-12 phaeochromocytoma cells (lacking PCSK1 and PCSK2 endopeptidases). Peptides corresponding to PEN and a proSAAS aa 40-59 have been detected in wild-type PC-12 cells. Expressed in adult brain (all major structural regions), adrenal gland (medulla) and spinal cord (dorsal and ventral horn). Expressed in pancreatic islands.

The protein resides in the secreted. It is found in the golgi apparatus. The protein localises to the trans-Golgi network. May function in the control of the neuroendocrine secretory pathway. Proposed be a specific endogenous inhibitor of PCSK1. ProSAAS and Big PEN-LEN, both containing the C-terminal inhibitory domain, but not the processed peptides reduce PCSK1 activity in the endoplasmic reticulum and Golgi. It reduces the activity of the 87 kDa form but not the autocatalytically derived 65 kDa form of PCSK1. Subsequent processing of proSAAS may eliminate the inhibition. Slows down convertase-mediated processing of proopiomelanocortin and proenkephalin. May control the intracellular timing of PCSK1 rather than its total level of activity. Its function is as follows. Endogenous ligand for GPR171. Neuropeptide involved in the regulation of feeding. The polypeptide is ProSAAS (Pcsk1n) (Rattus norvegicus (Rat)).